We begin with the raw amino-acid sequence, 143 residues long: Ayaconin (143 aa).

The N-terminal stretch at 1-22 is a signal peptide; the sequence is MSFLFFLVVLISIGLWVGPCVA.

As to quaternary structure, interacts with human F12 (inactive). Salivary gland.

Its subcellular location is the secreted. Its function is as follows. Inhibits the intrinsic blood coagulation pathway in the host by blocking activation of host coagulation factor XII (F12). In Lutzomyia ayacuchensis (Sand fly), this protein is Ayaconin.